A 175-amino-acid chain; its full sequence is Probable RNA-binding protein EIF1AD (175 aa).

The 85-residue stretch at 5 to 89 folds into the S1-like domain; the sequence is TKKRYITNKV…VKGEIEYILD (85 aa). The segment covering 116-128 has biased composition (basic and acidic residues); the sequence is EAKRGQTSDKMID. The disordered stretch occupies residues 116–175; that stretch reads EAKRGQTSDKMIDDDMLPPSESEEEDESEGEETYDEDDVDDEEEEEFDTYNPNRMQAPSK. Over residues 129–163 the composition is skewed to acidic residues; the sequence is DDMLPPSESEEEDESEGEETYDEDDVDDEEEEEFD. Positions 165–175 are enriched in polar residues; the sequence is YNPNRMQAPSK.

The protein belongs to the EIF1AD family.

This is Probable RNA-binding protein EIF1AD from Caenorhabditis elegans.